The chain runs to 99 residues: MSSFFGSGAGSPSNDMTARKEQMKQSIQQELAIANAQQLINKINENCFAKCVTKPSTSLSSSQESCLSQCMTLYMAAFDQVSRSYVARISKERGVAPGL.

The segment covering 1–13 (MSSFFGSGAGSPS) has biased composition (low complexity). Residues 1-24 (MSSFFGSGAGSPSNDMTARKEQMK) form a disordered region. Positions 47 to 70 (CFAKCVTKPSTSLSSSQESCLSQC) match the Twin CX3C motif motif. Cystine bridges form between cysteine 47/cysteine 70 and cysteine 51/cysteine 66.

Belongs to the small Tim family. As to quaternary structure, heterohexamer; composed of 3 copies of TIM8 and 3 copies of TIM13, named soluble 70 kDa complex. Associates with the TIM22 complex, whose core is composed of TIM22 and TIM54. Interacts with the transmembrane regions of multi-pass transmembrane proteins in transit.

The protein localises to the mitochondrion inner membrane. Mitochondrial intermembrane chaperone that participates in the import and insertion of some multi-pass transmembrane proteins into the mitochondrial inner membrane. Also required for the transfer of beta-barrel precursors from the TOM complex to the sorting and assembly machinery (SAM complex) of the outer membrane. Acts as a chaperone-like protein that protects the hydrophobic precursors from aggregation and guide them through the mitochondrial intermembrane space. The TIM8-TIM13 complex is non essential and only mediates the import of few proteins, while the predominant TIM9-TIM10 70 kDa complex is crucial and mediates the import of much more proteins. This is Mitochondrial import inner membrane translocase subunit TIM13 (TIM13) from Cryptococcus neoformans var. neoformans serotype D (strain B-3501A) (Filobasidiella neoformans).